The following is a 129-amino-acid chain: Follitropin subunit beta (129 aa).

An N-terminal signal peptide occupies residues 1-18; sequence MKSIQFCFFFCCWKAICC. 6 cysteine pairs are disulfide-bonded: Cys21/Cys69, Cys35/Cys84, Cys38/Cys122, Cys46/Cys100, Cys50/Cys102, and Cys105/Cys112. Asn25 and Asn42 each carry an N-linked (GlcNAc...) asparagine glycan.

This sequence belongs to the glycoprotein hormones subunit beta family. In terms of assembly, heterodimer. The active follitropin is a heterodimer composed of an alpha chain/CGA shared with other hormones and a unique beta chain/FSHB shown here.

Its subcellular location is the secreted. Its function is as follows. Together with the alpha chain CGA constitutes follitropin, the follicle-stimulating hormone, and provides its biological specificity to the hormone heterodimer. Binds FSHR, a G protein-coupled receptor, on target cells to activate downstream signaling pathways. Follitropin is involved in follicle development and spermatogenesis in reproductive organs. This chain is Follitropin subunit beta (FSHB), found in Cavia porcellus (Guinea pig).